The following is a 263-amino-acid chain: Endonuclease 8 (263 aa).

P2 (schiff-base intermediate with DNA) is an active-site residue. The active-site Proton donor is the E3. The active-site Proton donor; for beta-elimination activity is K53. DNA-binding residues include Q70, R125, and N169. The FPG-type zinc finger occupies 229-263; the sequence is KVFHRDGERCERCGGVIEKTTLSSRPFYWCPGCQH. Residue R253 is the Proton donor; for delta-elimination activity of the active site.

It belongs to the FPG family. The cofactor is Zn(2+).

The enzyme catalyses 2'-deoxyribonucleotide-(2'-deoxyribose 5'-phosphate)-2'-deoxyribonucleotide-DNA = a 3'-end 2'-deoxyribonucleotide-(2,3-dehydro-2,3-deoxyribose 5'-phosphate)-DNA + a 5'-end 5'-phospho-2'-deoxyribonucleoside-DNA + H(+). In terms of biological role, involved in base excision repair of DNA damaged by oxidation or by mutagenic agents. Acts as a DNA glycosylase that recognizes and removes damaged bases. Has a preference for oxidized pyrimidines, such as thymine glycol, 5,6-dihydrouracil and 5,6-dihydrothymine. Has AP (apurinic/apyrimidinic) lyase activity and introduces nicks in the DNA strand. Cleaves the DNA backbone by beta-delta elimination to generate a single-strand break at the site of the removed base with both 3'- and 5'-phosphates. The chain is Endonuclease 8 from Klebsiella pneumoniae (strain 342).